A 478-amino-acid polypeptide reads, in one-letter code: Monocarboxylate transporter 2 (478 aa).

Over 1–15 (MPPMPSAPPVHPPPD) the chain is Cytoplasmic. Residues 16–36 (GGWGWIVVGAAFISIGFSYAF) form a helical membrane-spanning segment. At 37 to 59 (PKAVTVFFKEIQQIFHTTYSEIA) the chain is on the extracellular side. Residues 60–80 (WISSIMLAVMYAGGPVSSVLV) form a helical membrane-spanning segment. The Cytoplasmic segment spans residues 81–89 (NKYGSRPVV). A helical membrane pass occupies residues 90-110 (IAGGLLCCLGMVLASFSSSVV). Residues 111 to 115 (QLYLT) are Extracellular-facing. Residues 116–136 (MGFITGLGLAFNLQPALTIIG) form a helical membrane-spanning segment. Topologically, residues 137 to 148 (KYFYRKRPMANG) are cytoplasmic. A helical transmembrane segment spans residues 149 to 169 (LAMAGSPVFLSSLAPFNQYLF). Residues 170-173 (NTFG) lie on the Extracellular side of the membrane. The helical transmembrane segment at 174 to 194 (WKGSFLILGSLLLNACVAGSL) threads the bilayer. At 195-246 (MRPLGPNQTTSKSKNKTGKTEDDSSPKKIKTKKSTWEKVNKYLDFSLFKHRG) the chain is on the cytoplasmic side. Residues 200–224 (PNQTTSKSKNKTGKTEDDSSPKKIK) form a disordered region. The helical transmembrane segment at 247-267 (FLIYLSGNVIMFLGFFAPIIF) threads the bilayer. Residues 268–282 (LAPYAKDQGIDEYSA) are Extracellular-facing. A helical transmembrane segment spans residues 283–303 (AFLLSVMAFVDMFARPSVGLI). At 304 to 312 (ANSKYIRPR) the chain is on the cytoplasmic side. A helical transmembrane segment spans residues 313–333 (IQYFFSFAIMFNGVCHLLCPL). The Extracellular segment spans residues 334-338 (AQDYT). Residues 339–359 (SLVLYAVFFGLGFGSVSSVLF) traverse the membrane as a helical segment. Over 360-373 (ETLMDLVGAPRFSS) the chain is Cytoplasmic. A helical membrane pass occupies residues 374–394 (AVGLVTIVECGPVLLGPPLAG). Over 395–406 (KLVDLTGEYKYM) the chain is Extracellular. A helical transmembrane segment spans residues 407–427 (YMSCGAIVVAASVWLLIGNAI). The Cytoplasmic segment spans residues 428 to 478 (NYRLLAKERKEENARQKTRESEPLSKSKHSEDVNVKVSNAQSVTSERETNI). The span at 437–461 (KEENARQKTRESEPLSKSKHSEDVN) shows a compositional bias: basic and acidic residues. The interval 437 to 478 (KEENARQKTRESEPLSKSKHSEDVNVKVSNAQSVTSERETNI) is disordered.

The protein belongs to the major facilitator superfamily. Monocarboxylate porter (TC 2.A.1.13) family. Homodimer. Interacts with GRID2IP. Interacts with EMB; interaction mediates SLC16A7 targeting to the plasma membrane. Interacts with isoform 2 of BSG. As to expression, detected in heart and in blood lymphocytes and monocytes (at protein level). High expression in testis, moderate to low in spleen, heart, kidney, pancreas, skeletal muscle, brain and leukocyte. Restricted expression in normal tissues, but widely expressed in cancer cells.

It localises to the cell membrane. It is found in the basolateral cell membrane. Its subcellular location is the cytoplasm. It carries out the reaction pyruvate(out) + H(+)(out) = pyruvate(in) + H(+)(in). The enzyme catalyses 3-methyl-2-oxobutanoate(out) + H(+)(out) = 3-methyl-2-oxobutanoate(in) + H(+)(in). The catalysed reaction is (S)-lactate(in) + H(+)(in) = (S)-lactate(out) + H(+)(out). It catalyses the reaction acetoacetate(out) + H(+)(out) = acetoacetate(in) + H(+)(in). It carries out the reaction (R)-3-hydroxybutanoate(out) + H(+)(out) = (R)-3-hydroxybutanoate(in) + H(+)(in). The enzyme catalyses 4-methyl-2-oxopentanoate(out) + H(+)(out) = 4-methyl-2-oxopentanoate(in) + H(+)(in). The catalysed reaction is (S)-3-hydroxybutanoate(out) + H(+)(out) = (S)-3-hydroxybutanoate(in) + H(+)(in). Its activity is regulated as follows. Transport activity exhibits steep dependence on substrate concentration. Substrate concentration sensitivity of SLC16A7 arises from the strong inter-subunit cooperativity of the SLC16A7 dimer during transport. Inhibited by AR-C155858. Proton-coupled monocarboxylate symporter. Catalyzes the rapid transport across the plasma membrane of monocarboxylates such as L-lactate, pyruvate and ketone bodies, acetoacetate, beta-hydroxybutyrate and acetate. Dimerization is functionally required and both subunits work cooperatively in transporting substrate. The protein is Monocarboxylate transporter 2 of Homo sapiens (Human).